The following is a 113-amino-acid chain: Eukaryotic translation initiation factor 1b (113 aa).

S2 carries the N-acetylserine modification. A Phosphoserine modification is found at S9.

It belongs to the SUI1 family.

Probably involved in translation. The polypeptide is Eukaryotic translation initiation factor 1b (EIF1B) (Homo sapiens (Human)).